The sequence spans 174 residues: Endoribonuclease YbeY (174 aa).

Zn(2+) contacts are provided by histidine 129, histidine 133, and histidine 139.

The protein belongs to the endoribonuclease YbeY family. Zn(2+) serves as cofactor.

Its subcellular location is the cytoplasm. Its function is as follows. Single strand-specific metallo-endoribonuclease involved in late-stage 70S ribosome quality control and in maturation of the 3' terminus of the 16S rRNA. This Lactobacillus acidophilus (strain ATCC 700396 / NCK56 / N2 / NCFM) protein is Endoribonuclease YbeY.